Here is a 538-residue protein sequence, read N- to C-terminus: Phosphoenolpyruvate carboxykinase (ATP) (538 aa).

Residues Arg-64, Tyr-205, and Lys-211 each coordinate substrate. Residues Lys-211, His-230, and 246 to 254 each bind ATP; that span reads GLSGTGKTT. Positions 211 and 230 each coordinate Mn(2+). A Mn(2+)-binding site is contributed by Asp-267. Residues Glu-295, Arg-331, 447–448, and Thr-453 each bind ATP; that span reads RI. Residue Arg-331 participates in substrate binding.

Belongs to the phosphoenolpyruvate carboxykinase (ATP) family. In terms of assembly, monomer. It depends on Mn(2+) as a cofactor.

It is found in the cytoplasm. The catalysed reaction is oxaloacetate + ATP = phosphoenolpyruvate + ADP + CO2. Its pathway is carbohydrate biosynthesis; gluconeogenesis. Functionally, involved in the gluconeogenesis. Catalyzes the conversion of oxaloacetate (OAA) to phosphoenolpyruvate (PEP) through direct phosphoryl transfer between the nucleoside triphosphate and OAA. This Mannheimia succiniciproducens (strain KCTC 0769BP / MBEL55E) protein is Phosphoenolpyruvate carboxykinase (ATP).